The sequence spans 223 residues: Uracil phosphoribosyltransferase (223 aa).

Residues Arg-86, Arg-111, and 145–153 (DPILATGST) each bind 5-phospho-alpha-D-ribose 1-diphosphate. Uracil-binding positions include Ile-209 and 214–216 (GDA). Residue Asp-215 participates in 5-phospho-alpha-D-ribose 1-diphosphate binding.

This sequence belongs to the UPRTase family. Mg(2+) serves as cofactor.

The catalysed reaction is UMP + diphosphate = 5-phospho-alpha-D-ribose 1-diphosphate + uracil. Its pathway is pyrimidine metabolism; UMP biosynthesis via salvage pathway; UMP from uracil: step 1/1. With respect to regulation, allosterically activated by GTP. Catalyzes the conversion of uracil and 5-phospho-alpha-D-ribose 1-diphosphate (PRPP) to UMP and diphosphate. The polypeptide is Uracil phosphoribosyltransferase (Natronomonas pharaonis (strain ATCC 35678 / DSM 2160 / CIP 103997 / JCM 8858 / NBRC 14720 / NCIMB 2260 / Gabara) (Halobacterium pharaonis)).